The primary structure comprises 350 residues: Histidinol-phosphate aminotransferase 2 (350 aa).

Residue lysine 210 is modified to N6-(pyridoxal phosphate)lysine.

The protein belongs to the class-II pyridoxal-phosphate-dependent aminotransferase family. Histidinol-phosphate aminotransferase subfamily. As to quaternary structure, homodimer. Pyridoxal 5'-phosphate is required as a cofactor.

It catalyses the reaction L-histidinol phosphate + 2-oxoglutarate = 3-(imidazol-4-yl)-2-oxopropyl phosphate + L-glutamate. It functions in the pathway amino-acid biosynthesis; L-histidine biosynthesis; L-histidine from 5-phospho-alpha-D-ribose 1-diphosphate: step 7/9. The protein is Histidinol-phosphate aminotransferase 2 of Mannheimia succiniciproducens (strain KCTC 0769BP / MBEL55E).